A 193-amino-acid polypeptide reads, in one-letter code: Probable thymidylate kinase (193 aa).

7–14 is an ATP binding site; sequence GIDGSGKT.

Belongs to the thymidylate kinase family.

The enzyme catalyses dTMP + ATP = dTDP + ADP. The sequence is that of Probable thymidylate kinase from Pyrobaculum calidifontis (strain DSM 21063 / JCM 11548 / VA1).